The chain runs to 234 residues: Fibrillarin-like rRNA/tRNA 2'-O-methyltransferase (234 aa).

Residues 91–92 (TT), 110–111 (EF), 137–138 (DA), and 157–160 (DVAQ) each bind S-adenosyl-L-methionine.

Belongs to the methyltransferase superfamily. Fibrillarin family. In terms of assembly, interacts with nop5. Component of box C/D small ribonucleoprotein (sRNP) particles that contain rpl7ae, FlpA and nop5, plus a guide RNA.

Its function is as follows. Involved in pre-rRNA and tRNA processing. Utilizes the methyl donor S-adenosyl-L-methionine to catalyze the site-specific 2'-hydroxyl methylation of ribose moieties in rRNA and tRNA. Site specificity is provided by a guide RNA that base pairs with the substrate. Methylation occurs at a characteristic distance from the sequence involved in base pairing with the guide RNA. The sequence is that of Fibrillarin-like rRNA/tRNA 2'-O-methyltransferase from Pyrobaculum calidifontis (strain DSM 21063 / JCM 11548 / VA1).